The primary structure comprises 330 residues: Ribosomal RNA small subunit methyltransferase C (330 aa).

This sequence belongs to the methyltransferase superfamily. RsmC family. Monomer.

The protein resides in the cytoplasm. It carries out the reaction guanosine(1207) in 16S rRNA + S-adenosyl-L-methionine = N(2)-methylguanosine(1207) in 16S rRNA + S-adenosyl-L-homocysteine + H(+). Its function is as follows. Specifically methylates the guanine in position 1207 of 16S rRNA in the 30S particle. In Haemophilus influenzae (strain PittEE), this protein is Ribosomal RNA small subunit methyltransferase C.